A 535-amino-acid chain; its full sequence is MELSPRSPPEMLESDCPSPLELKSAPSKKMWIKLRSLLRYMVKQLENGEVNIEELKKNLEYTASLLEAVYIDETRQILDTEDELRELRSDAVPSEVRDWLASTFTQQTRAKGRRAEEKPKFRSIVHAVQAGIFVERMFRRTYTAVGPTYSTAVHNCLKNLDVWCFDVFSLNRAADDHALRTIVFELLTRHSLISRFKIPTVFLMSFLEALETGYGKYKNPYHNQIHAADVTQTVHCFLLRTGMVHCLSEIEVLAIIFAAAIHDYEHTGTTNSFHIQTKSECAILYNDRSVLENHHISSVFRMMQDDEMNIFINLTKDEFVELRALVIEMVLATDMSCHFQQVKTMKTALQQLERIDKSKALSLLLHAADISHPTKQWSVHSRWTKALMEEFFRQGDKEAELGLPFSPLCDRTSTLVAQSQIGFIDFIVEPTFSVLTDVAEKSVQPLTDDDSKSKSQPSFQWRQPSLDVDVGDPNPDVVSFRSTWTKYIQENKQKWKERAASGITNQMSIDELSPCEEEAPSSPAEDEHNQNGNLD.

Residues 1 to 21 (MELSPRSPPEMLESDCPSPLE) form a disordered region. Ser-7 and Ser-14 each carry phosphoserine. Calmodulin-binding stretches follow at residues 27 to 47 (SKKMWIKLRSLLRYMVKQLEN) and 117 to 140 (EKPKFRSIVHAVQAGIFVERMFRR). Residues 145–502 (VGPTYSTAVH…QKWKERAASG (358 aa)) form the PDEase domain. His-222 acts as the Proton donor in catalysis. Zn(2+) contacts are provided by His-226, His-262, Asp-263, and Asp-369. Residue Asp-263 participates in Mg(2+) binding. 2 disordered regions span residues 445–474 (PLTDDDSKSKSQPSFQWRQPSLDVDVGDPN) and 495–535 (WKER…GNLD). Residues 454–463 (KSQPSFQWRQ) show a composition bias toward polar residues. Residues Ser-465 and Ser-513 each carry the phosphoserine modification.

Belongs to the cyclic nucleotide phosphodiesterase family. PDE1 subfamily. Homodimer. Zn(2+) is required as a cofactor. Mg(2+) serves as cofactor. In terms of tissue distribution, expressed in brain.

It localises to the cytoplasm. The protein resides in the cytosol. The enzyme catalyses a nucleoside 3',5'-cyclic phosphate + H2O = a nucleoside 5'-phosphate + H(+). It catalyses the reaction 3',5'-cyclic GMP + H2O = GMP + H(+). The catalysed reaction is 3',5'-cyclic AMP + H2O = AMP + H(+). Type I PDE are activated by the binding of calmodulin in the presence of Ca(2+). In terms of biological role, cyclic nucleotide phosphodiesterase with a dual specificity for the second messengers cAMP and cGMP, which are key regulators of many important physiological processes. Has a preference for cGMP as a substrate. In Rattus norvegicus (Rat), this protein is Dual specificity calcium/calmodulin-dependent 3',5'-cyclic nucleotide phosphodiesterase 1B.